The sequence spans 843 residues: Eisosome protein 1 (843 aa).

Residue serine 2 is modified to N-acetylserine. Serine 2 is subject to Phosphoserine. A disordered region spans residues 13 to 44 (HNIGKTSGGGSRTSSITSSKKSLKHGSKSLRK). A compositionally biased stretch (basic residues) spans 33 to 44 (KSLKHGSKSLRK). Residues serine 88 and serine 130 each carry the phosphoserine modification. Positions 120-174 (KMGPKVVRNNSITSATSKTSKESQTKRKSKESPGAAASKAYSMTMETTSLSSQTN) are disordered. Composition is skewed to polar residues over residues 127-137 (RNNSITSATSK) and 163-174 (TMETTSLSSQTN). 4 positions are modified to phosphoserine: serine 182, serine 401, serine 584, and serine 710. A disordered region spans residues 717–843 (DLPTQLEKIE…QDAISNQEKK (127 aa)). A Phosphothreonine modification is found at threonine 720. Residues 752–764 (STAAKEATETSSA) are compositionally biased toward low complexity. Phosphoserine is present on residues serine 763 and serine 775. The segment covering 781–797 (SGKEDANDCKSAEHSKE) has biased composition (basic and acidic residues). The span at 798 to 810 (ISVSQKAGNNKSL) shows a compositional bias: polar residues. Serine 816, serine 828, serine 829, and serine 838 each carry phosphoserine.

It belongs to the EIS1 family.

The protein resides in the cytoplasmic granule. It is found in the cell membrane. In terms of biological role, required for normal formation of eisosomes, large cytoplasmic protein assemblies that localize to specialized domains on plasma membrane and mark the site of endocytosis. This is Eisosome protein 1 (EIS1) from Saccharomyces cerevisiae (strain RM11-1a) (Baker's yeast).